Consider the following 368-residue polypeptide: Divinyl chlorophyll a/b light-harvesting protein PcbA (368 aa).

The next 6 helical transmembrane spans lie at 27–47 (FIAS…ANTL), 63–83 (GFVV…NGVI), 89–109 (MLVV…GAML), 203–223 (VMGG…WHIF), 243–263 (FVLS…AFWA), and 307–327 (LSNF…WHGL).

The protein belongs to the PsbB/PsbC family. IsiA/Pcb subfamily. The antenna complex consists of divinyl chlorophylls (a and b) and divinyl chlorophyll a/b binding proteins. Forms complexes with PSII, consisting of a PSII dimer and 4 or 8 PcbA subunits. These complexes are also found under conditions of iron-starvation. Requires divinyl chlorophyll a as cofactor. Divinyl chlorophyll b serves as cofactor.

The protein localises to the cellular thylakoid membrane. The antenna complex functions as a light receptor, it captures and delivers excitation energy to photosystems II. The Prochlorales pcb genes are not related to higher plant LHCs. The protein is Divinyl chlorophyll a/b light-harvesting protein PcbA (pcbA) of Prochlorococcus marinus (strain MIT 9313).